The chain runs to 393 residues: Zinc-regulated GTPase metalloprotein activator 1 (393 aa).

The psi-PxLVp motif signature appears at 16 to 23 (EDCPELVP). 47 to 54 (GYLGAGKT) contributes to the GTP binding site. Zn(2+) is bound by residues cysteine 105, cysteine 107, and cysteine 108. The CXCC motif signature appears at 105 to 108 (CLCC). GTP-binding positions include 108–112 (CSVKD) and 201–204 (NKTD). The 104-residue stretch at 271–374 (IVTVTFEVPG…VLQQLFLTAV (104 aa)) folds into the CobW C-terminal domain.

The protein belongs to the SIMIBI class G3E GTPase family. ZNG1 subfamily. As to expression, present at high level in the nuclei of the ureteric bud cells in the developing kidneys.

It localises to the nucleus. The catalysed reaction is GTP + H2O = GDP + phosphate + H(+). Its function is as follows. Zinc chaperone that directly transfers zinc cofactor to target metalloproteins, thereby activating them. Catalyzes zinc insertion into the active site of methionine aminopeptidase METAP1, which function to cleave the initiator methionine from polypeptides during or after protein translation. Mechanistically, the N-terminal psi-PxLVp motif binds to the C6H2-type zinc finger of inactive form of METAP1. After formation of the docked complex, zinc is transferred from the CXCC motif in the GTPase domain of ZNG1 to the zinc binding site in the peptidase domain of METAP1 in a process requiring GTP hydrolysis. GTP/GDP exchange is required for release of active METAP1. The sequence is that of Zinc-regulated GTPase metalloprotein activator 1 (Zng1) from Mus musculus (Mouse).